The primary structure comprises 705 residues: Probable glutamate carboxypeptidase AMP1 (705 aa).

Over 1 to 24 (MSQPLTTRPTVTGISIIPFRQPPP) the chain is Cytoplasmic. The chain crosses the membrane as a helical; Signal-anchor for type II membrane protein span at residues 25–42 (LCSFLFVIVLFVATFYTL). The Extracellular segment spans residues 43-705 (HHPDAVTPPL…ASKALKGGFT (663 aa)). 3 N-linked (GlcNAc...) asparagine glycosylation sites follow: N74, N137, and N322. The interval 255–548 (GVVGGEKLSL…GIWGLLGILL (294 aa)) is catalytic. Positions 356 and 366 each coordinate Zn(2+). The Nucleophile role is filled by E403. E404, D432, and H514 together coordinate Zn(2+). Residue N676 is glycosylated (N-linked (GlcNAc...) asparagine).

This sequence belongs to the peptidase M28 family. M28B subfamily. The cofactor is Zn(2+). In terms of tissue distribution, expressed in all plant parts. Highest levels in the bolt stem, inflorescence, root and silique. Low level in leaves.

The protein resides in the endoplasmic reticulum membrane. It catalyses the reaction Release of an unsubstituted, C-terminal glutamyl residue, typically from Ac-Asp-Glu or folylpoly-gamma-glutamates.. Functionally, may modulate the level of one or more small signaling molecules that have a role in regulating meristem function. May play a role in balancing and restricting the meristem-promoting activity of auxin signaling. Involved in ethylene and giberellin (GA) signaling pathways or in a parallel pathway controlling cell and hypocotyl elongation and cellular organization. Involved in abscisic acid (ABA) signaling pathway. Plays a negative role in ABA-mediated seed germination and seedling development. Acts in association with LAMP1 to suppress ectopic stem cell niche formation in the shoot apical meristem (SAM) independently of cytokinin signaling pathway. Modulates responses to ABA, oxidative stress and abotic stress. Acts as a negative regulator of the ABA signaling pathway to modulate freezing and drought stress responses. Mediates carbon and amino acid metabolism. May be involved in the acquisition and/or maintenance of seed dormancy. Involved in the regulation of response to heat shock and plant defense. This is Probable glutamate carboxypeptidase AMP1 from Arabidopsis thaliana (Mouse-ear cress).